Consider the following 73-residue polypeptide: Toxin Td3 (73 aa).

Positions 1 to 7 (IGMVVEC) are cleaved as a signal peptide. The 63-residue stretch at 8–70 (KDGYLMGPDG…VWERATNRCG (63 aa)) folds into the LCN-type CS-alpha/beta domain. Intrachain disulfides connect C18-C69, C22-C44, C30-C50, and C34-C52. K71 carries the post-translational modification Lysine amide.

The protein belongs to the long (4 C-C) scorpion toxin superfamily. Sodium channel inhibitor family. Beta subfamily. Expressed by the venom gland.

Its subcellular location is the secreted. Functionally, beta toxins bind voltage-independently at site-4 of sodium channels (Nav) and shift the voltage of activation toward more negative potentials thereby affecting sodium channel activation and promoting spontaneous and repetitive firing. The chain is Toxin Td3 from Tityus discrepans (Venezuelan scorpion).